The following is a 560-amino-acid chain: MAKKVAVIGAGVSGLSSIKCCLDENLEPTCFERSSDFGGLWKFAEASEDGMTRVYRSLVTNVCKEMSCYSDFPFHEDYPNFMSHEKFWDYLREFAEHFGLLKYIRFKTTVRSVTKRPDFSETGQWEVVTETEGKQDRAVFDAVMVCTGQFLSPRLPLESFPGIHKFKGQILHSQEYRIPDAFRGKRILVVGLGNTGGDVAVELSGIAAQVFLSTRTGAWVRSRSSVGGYPLNMMQTRWRNFLAQVLPSRFVSWNQERQMNKIFNHENYGLSIAKGKKPKFIVNDELPTCILCGKITMKTSVKDFTESSIVFEDGTIEANIDVVIFTTGYEFSFPFFEEPLKSLCTKKVILYKRVFPPNLERSTLAIIGLISLTGSILVGTEFQARWATRVFKGLCNIPPSQKLMAEAIKKEELIKRGVIKDTSQDKLDFISYMDELTQCIGAKPNIPLLFLKDPRLAWEVFFGPCTPYQYRLMGPGRWDGARNAILTQWDRTVKPLKTRTVPKSQEPASLSRYLKTWGAPVLIVSLLLIYKSSLFLELVQSKLQGRFSPSRILWYIPQNS.

Residues 9–13 (GAGVS), E32, and 40–41 (LW) each bind FAD. Residues 60-61 (TN) and 195-198 (TGGD) contribute to the NADP(+) site. The helical transmembrane segment at 519 to 539 (APVLIVSLLLIYKSSLFLELV) threads the bilayer.

It belongs to the FMO family. It depends on FAD as a cofactor. As to expression, detected in liver and kidney (at protein level).

The protein localises to the microsome membrane. It is found in the endoplasmic reticulum membrane. It catalyses the reaction N,N-dimethylaniline + NADPH + O2 + H(+) = N,N-dimethylaniline N-oxide + NADP(+) + H2O. In terms of biological role, this protein is involved in the oxidative metabolism of a variety of xenobiotics such as drugs and pesticides. The protein is Dimethylaniline monooxygenase [N-oxide-forming] 4 (Fmo4) of Rattus norvegicus (Rat).